We begin with the raw amino-acid sequence, 438 residues long: Histidinol dehydrogenase (438 aa).

3 residues coordinate NAD(+): Tyr-138, Gln-199, and Asn-222. Positions 245, 267, and 270 each coordinate substrate. Gln-267 and His-270 together coordinate Zn(2+). Residues Glu-335 and His-336 each act as proton acceptor in the active site. Residues His-336, Asp-369, Glu-423, and His-428 each contribute to the substrate site. A Zn(2+)-binding site is contributed by Asp-369. His-428 contacts Zn(2+).

The protein belongs to the histidinol dehydrogenase family. It depends on Zn(2+) as a cofactor.

The enzyme catalyses L-histidinol + 2 NAD(+) + H2O = L-histidine + 2 NADH + 3 H(+). It participates in amino-acid biosynthesis; L-histidine biosynthesis; L-histidine from 5-phospho-alpha-D-ribose 1-diphosphate: step 9/9. Catalyzes the sequential NAD-dependent oxidations of L-histidinol to L-histidinaldehyde and then to L-histidine. The chain is Histidinol dehydrogenase from Burkholderia lata (strain ATCC 17760 / DSM 23089 / LMG 22485 / NCIMB 9086 / R18194 / 383).